The sequence spans 624 residues: MKSARPKSVAPKSGQALLTLGALGVVFGDIGTSPLYSLHTAFSMQHNKVEVTQENVYGIISMVLWTITLIVTVKYVMLVTRADNQGQGGILALVALLKNRGHWGKFVAVAGMLGAALFYGDVVITPAISVLSATEGLTVISPSFERFILPVSLAVLIAIFAIQPLGTEKVGKAFGPIMLLWFVTLAGLGIPQIIGHPEILQSLSPHWALRLIVAEPFQAFVLLGAVVLTVTGAEALYADMGHFGARPIRVAWFCVVMPALILTYLGQGALVINQPEAVRNPMFYLAPEGLRIPLVILATIATVIASQAVISGAYSLTKQAVNLKLLPRMVIRHTSRKEEGQIYMPLVNGLLFVSVMVVVLVFRSSESLASAYGLAVTGTLVLVSVLYLIYVHTTWWKTALFIVLIGIPEVLLFASNTTKIHDGGWLPLLIAAVLIVVMRTWEWGSDRVNQERAELELPMDKFLEKLDQPHNIGLRKVAEVAVFPHGTSDTVPLSLVRCVKDLKLLYREIVIVRIVQEHVPHVPPEERAEMEVLHHAPIRVVRVDLHLGYFDEQNLPEHLHAIDPTWDNATYFLSALTLRSRLPGKIAGWRDRLYLSMERNQASRTESFKLQPSKTITVGTELHL.

A run of 12 helical transmembrane segments spans residues 16–36 (ALLT…SPLY), 59–79 (IISM…VMLV), 106–126 (FVAV…VITP), 147–167 (FILP…PLGT), 174–194 (FGPI…PQII), 211–231 (LIVA…LTVT), 252–272 (WFCV…ALVI), 292–312 (IPLV…VISG), 342–362 (IYMP…VLVF), 371–391 (AYGL…LIYV), 394–414 (TWWK…LLFA), and 418–438 (TKIH…IVVM).

It belongs to the HAK/KUP transporter (TC 2.A.72) family.

It localises to the cell membrane. The catalysed reaction is K(+)(in) + H(+)(in) = K(+)(out) + H(+)(out). Transport of potassium into the cell. Likely operates as a K(+):H(+) symporter. The protein is Probable potassium transport system protein Kup of Corynebacterium glutamicum (strain ATCC 13032 / DSM 20300 / JCM 1318 / BCRC 11384 / CCUG 27702 / LMG 3730 / NBRC 12168 / NCIMB 10025 / NRRL B-2784 / 534).